The following is a 385-amino-acid chain: Chaperone protein DnaJ (385 aa).

The region spanning 5 to 72 is the J domain; that stretch reads DYYEVLGVGK…QKRAAYDQFG (68 aa). A disordered region spans residues 26-48; the sequence is RKLAMKHHPDRNQGDGAKASEEK. The span at 35-48 shows a compositional bias: basic and acidic residues; sequence DRNQGDGAKASEEK. A CR-type zinc finger spans residues 145–223; the sequence is GKESQIRIPT…CNGAGKVKKQ (79 aa). Zn(2+) is bound by residues cysteine 158, cysteine 161, cysteine 175, cysteine 178, cysteine 197, cysteine 200, cysteine 211, and cysteine 214. CXXCXGXG motif repeat units follow at residues 158–165, 175–182, 197–204, and 211–218; these read CDTCHGSG, CTTCHGAG, CPHCHGSG, and CTSCNGAG. Positions 362–385 are disordered; that stretch reads FRKGGDKHSPTSKSWTDRVKDLFK.

It belongs to the DnaJ family. As to quaternary structure, homodimer. Zn(2+) serves as cofactor.

It localises to the cytoplasm. Its function is as follows. Participates actively in the response to hyperosmotic and heat shock by preventing the aggregation of stress-denatured proteins and by disaggregating proteins, also in an autonomous, DnaK-independent fashion. Unfolded proteins bind initially to DnaJ; upon interaction with the DnaJ-bound protein, DnaK hydrolyzes its bound ATP, resulting in the formation of a stable complex. GrpE releases ADP from DnaK; ATP binding to DnaK triggers the release of the substrate protein, thus completing the reaction cycle. Several rounds of ATP-dependent interactions between DnaJ, DnaK and GrpE are required for fully efficient folding. Also involved, together with DnaK and GrpE, in the DNA replication of plasmids through activation of initiation proteins. The chain is Chaperone protein DnaJ from Leptothrix cholodnii (strain ATCC 51168 / LMG 8142 / SP-6) (Leptothrix discophora (strain SP-6)).